The chain runs to 274 residues: NADPH-dependent 7-cyano-7-deazaguanine reductase (274 aa).

80–82 (VES) lines the substrate pocket. An NADPH-binding site is contributed by 82 to 83 (SK). C181 (thioimide intermediate) is an active-site residue. Residue D188 is the Proton donor of the active site. Position 220–221 (220–221 (HE)) interacts with substrate. Position 249–250 (249–250 (RG)) interacts with NADPH.

The protein belongs to the GTP cyclohydrolase I family. QueF type 2 subfamily. Homodimer.

It localises to the cytoplasm. The catalysed reaction is 7-aminomethyl-7-carbaguanine + 2 NADP(+) = 7-cyano-7-deazaguanine + 2 NADPH + 3 H(+). The protein operates within tRNA modification; tRNA-queuosine biosynthesis. In terms of biological role, catalyzes the NADPH-dependent reduction of 7-cyano-7-deazaguanine (preQ0) to 7-aminomethyl-7-deazaguanine (preQ1). In Burkholderia vietnamiensis (strain G4 / LMG 22486) (Burkholderia cepacia (strain R1808)), this protein is NADPH-dependent 7-cyano-7-deazaguanine reductase.